A 294-amino-acid chain; its full sequence is Bifunctional protein FolD (294 aa).

Residues 175 to 177 and isoleucine 241 each bind NADP(+); that span reads GAS.

This sequence belongs to the tetrahydrofolate dehydrogenase/cyclohydrolase family. Homodimer.

It catalyses the reaction (6R)-5,10-methylene-5,6,7,8-tetrahydrofolate + NADP(+) = (6R)-5,10-methenyltetrahydrofolate + NADPH. It carries out the reaction (6R)-5,10-methenyltetrahydrofolate + H2O = (6R)-10-formyltetrahydrofolate + H(+). It functions in the pathway one-carbon metabolism; tetrahydrofolate interconversion. Catalyzes the oxidation of 5,10-methylenetetrahydrofolate to 5,10-methenyltetrahydrofolate and then the hydrolysis of 5,10-methenyltetrahydrofolate to 10-formyltetrahydrofolate. This Hahella chejuensis (strain KCTC 2396) protein is Bifunctional protein FolD.